We begin with the raw amino-acid sequence, 130 residues long: UPF0102 protein RSc3265 (130 aa).

This sequence belongs to the UPF0102 family.

This is UPF0102 protein RSc3265 from Ralstonia nicotianae (strain ATCC BAA-1114 / GMI1000) (Ralstonia solanacearum).